An 835-amino-acid chain; its full sequence is Lon protease (835 aa).

One can recognise a Lon N-terminal domain in the interval 36-234 (VHVFPLLRRP…KALILLKKEL (199 aa)). 387–394 (GPPGVGKT) is an ATP binding site. The Lon proteolytic domain maps to 646 to 828 (RTPVGVCMGL…DQVFKISFPN (183 aa)). Catalysis depends on residues Ser734 and Lys777.

The protein belongs to the peptidase S16 family. In terms of assembly, homohexamer. Organized in a ring with a central cavity.

The protein resides in the cytoplasm. The enzyme catalyses Hydrolysis of proteins in presence of ATP.. In terms of biological role, ATP-dependent serine protease that mediates the selective degradation of mutant and abnormal proteins as well as certain short-lived regulatory proteins. Required for cellular homeostasis and for survival from DNA damage and developmental changes induced by stress. Degrades polypeptides processively to yield small peptide fragments that are 5 to 10 amino acids long. Binds to DNA in a double-stranded, site-specific manner. This is Lon protease from Protochlamydia amoebophila (strain UWE25).